Consider the following 712-residue polypeptide: Polyribonucleotide nucleotidyltransferase (712 aa).

2 residues coordinate Mg(2+): D493 and D499. A KH domain is found at 560–619 (PRLLTFKVDPEDIGKIIGPGGKTVRGITEATGAKVDISDDGTITVSSSVGGQAEAARAMI). Residues 629–697 (GQVYLGKVTR…HKGRINLTRL (69 aa)) enclose the S1 motif domain.

The protein belongs to the polyribonucleotide nucleotidyltransferase family. Mg(2+) is required as a cofactor.

The protein localises to the cytoplasm. The catalysed reaction is RNA(n+1) + phosphate = RNA(n) + a ribonucleoside 5'-diphosphate. Its function is as follows. Involved in mRNA degradation. Catalyzes the phosphorolysis of single-stranded polyribonucleotides processively in the 3'- to 5'-direction. The sequence is that of Polyribonucleotide nucleotidyltransferase from Synechococcus sp. (strain JA-2-3B'a(2-13)) (Cyanobacteria bacterium Yellowstone B-Prime).